The sequence spans 270 residues: 4-hydroxy-tetrahydrodipicolinate reductase (270 aa).

Residues 11-16 (GCQGRM) and glutamate 37 each bind NAD(+). Arginine 38 contributes to the NADP(+) binding site. NAD(+) contacts are provided by residues 101 to 103 (GTT) and 125 to 128 (ASNF). The Proton donor/acceptor role is filled by histidine 158. A (S)-2,3,4,5-tetrahydrodipicolinate-binding site is contributed by histidine 159. The active-site Proton donor is lysine 162. 168–169 (GT) serves as a coordination point for (S)-2,3,4,5-tetrahydrodipicolinate.

The protein belongs to the DapB family.

It is found in the cytoplasm. The catalysed reaction is (S)-2,3,4,5-tetrahydrodipicolinate + NAD(+) + H2O = (2S,4S)-4-hydroxy-2,3,4,5-tetrahydrodipicolinate + NADH + H(+). It carries out the reaction (S)-2,3,4,5-tetrahydrodipicolinate + NADP(+) + H2O = (2S,4S)-4-hydroxy-2,3,4,5-tetrahydrodipicolinate + NADPH + H(+). The protein operates within amino-acid biosynthesis; L-lysine biosynthesis via DAP pathway; (S)-tetrahydrodipicolinate from L-aspartate: step 4/4. Catalyzes the conversion of 4-hydroxy-tetrahydrodipicolinate (HTPA) to tetrahydrodipicolinate. This Tolumonas auensis (strain DSM 9187 / NBRC 110442 / TA 4) protein is 4-hydroxy-tetrahydrodipicolinate reductase.